The sequence spans 952 residues: Ubiquitin carboxyl-terminal hydrolase 15 (952 aa).

A2 is modified (N-acetylalanine). Positions 2 to 223 are mediates interaction with SART3; that stretch reads AEGGAADLDT…KNEDGTWPRG (222 aa). Residues 7–118 form the DUSP domain; that stretch reads ADLDTQRSDI…GQEPIARKVV (112 aa). The USP domain maps to 260–904; the sequence is CGLSNLGNTC…AAYVLFYQRQ (645 aa). Residue C269 is the Nucleophile of the active site. At T573 the chain carries Phosphothreonine. Positions 597–665 are disordered; the sequence is ETDGPLRCCE…GGDNDSENGL (69 aa). Positions 627–644 are enriched in acidic residues; that stretch reads METDEPDDESSQDQELPS. The Proton acceptor role is filled by H862. Residues 923-952 are disordered; sequence SAATGVPLESDEDSNDNDNDLENENCMHTN. Residues 931–945 show a composition bias toward acidic residues; sequence ESDEDSNDNDNDLEN. Phosphoserine occurs at positions 932 and 936.

It belongs to the peptidase C19 family. In terms of assembly, a homodimer structure has been reported; however it is unclear whether the protein form a homodimer in vivo. Identified in a complex with the COP9 signalosome complex (CSN). Interacts with SMAD1, SMAD2 and SMAD3; the interaction is direct. Forms a complex with SMURF2 and SMAD7. Interacts with TGFBR1. Interacts with SART3; the interaction is direct. May interact with RNF20 and RNF40. May interact with PRKN. Interacts with INCA1. In terms of processing, phosphorylated. Phosphorylation protects against ubiquitination and subsequent degradation by the proteasome. Ubiquitinated, leading to degradation by the proteasome. As to expression, highly expressed in testis and spleen, and at lower level in other tissues.

The protein localises to the cytoplasm. Its subcellular location is the nucleus. It localises to the mitochondrion. The enzyme catalyses Thiol-dependent hydrolysis of ester, thioester, amide, peptide and isopeptide bonds formed by the C-terminal Gly of ubiquitin (a 76-residue protein attached to proteins as an intracellular targeting signal).. Its function is as follows. Hydrolase that removes conjugated ubiquitin from target proteins and regulates various pathways such as the TGF-beta receptor signaling, NF-kappa-B and RNF41/NRDP1-PRKN pathways. Acts as a key regulator of TGF-beta receptor signaling pathway, but the precise mechanism is still unclear: according to a report, acts by promoting deubiquitination of monoubiquitinated R-SMADs (SMAD1, SMAD2 and/or SMAD3), thereby alleviating inhibition of R-SMADs and promoting activation of TGF-beta target genes. According to another reports, regulates the TGF-beta receptor signaling pathway by mediating deubiquitination and stabilization of TGFBR1, leading to an enhanced TGF-beta signal. Able to mediate deubiquitination of monoubiquitinated substrates, 'Lys-27'-, 'Lys-48'- and 'Lys-63'-linked polyubiquitin chains. May also regulate gene expression and/or DNA repair through the deubiquitination of histone H2B. Acts as an inhibitor of mitophagy by counteracting the action of parkin (PRKN): hydrolyzes cleavage of 'Lys-48'- and 'Lys-63'-linked polyubiquitin chains attached by parkin on target proteins such as MFN2, thereby reducing parkin's ability to drive mitophagy. Acts as an associated component of COP9 signalosome complex (CSN) and regulates different pathways via this association: regulates NF-kappa-B by mediating deubiquitination of NFKBIA and deubiquitinates substrates bound to VCP. Involved in endosome organization by mediating deubiquitination of SQSTM1: ubiquitinated SQSTM1 forms a molecular bridge that restrains cognate vesicles in the perinuclear region and its deubiquitination releases target vesicles for fast transport into the cell periphery. Acts as a negative regulator of antifungal immunity by mediating 'Lys-27'-linked deubiquitination of CARD9, thereby inactivating CARD9. The polypeptide is Ubiquitin carboxyl-terminal hydrolase 15 (Usp15) (Rattus norvegicus (Rat)).